Here is a 307-residue protein sequence, read N- to C-terminus: 4-hydroxy-3-methylbut-2-enyl diphosphate reductase (307 aa).

Cys-13 contributes to the [4Fe-4S] cluster binding site. The (2E)-4-hydroxy-3-methylbut-2-enyl diphosphate site is built by His-42 and His-75. Positions 42 and 75 each coordinate dimethylallyl diphosphate. Isopentenyl diphosphate-binding residues include His-42 and His-75. Cys-97 is a [4Fe-4S] cluster binding site. Residue His-125 participates in (2E)-4-hydroxy-3-methylbut-2-enyl diphosphate binding. His-125 is a binding site for dimethylallyl diphosphate. Residue His-125 coordinates isopentenyl diphosphate. The active-site Proton donor is the Glu-127. Thr-165 serves as a coordination point for (2E)-4-hydroxy-3-methylbut-2-enyl diphosphate. Cys-195 is a binding site for [4Fe-4S] cluster. The (2E)-4-hydroxy-3-methylbut-2-enyl diphosphate site is built by Ser-223, Ser-224, Asn-225, and Ser-267. Residues Ser-223, Ser-224, Asn-225, and Ser-267 each coordinate dimethylallyl diphosphate. Residues Ser-223, Ser-224, Asn-225, and Ser-267 each coordinate isopentenyl diphosphate.

It belongs to the IspH family. The cofactor is [4Fe-4S] cluster.

The catalysed reaction is isopentenyl diphosphate + 2 oxidized [2Fe-2S]-[ferredoxin] + H2O = (2E)-4-hydroxy-3-methylbut-2-enyl diphosphate + 2 reduced [2Fe-2S]-[ferredoxin] + 2 H(+). It catalyses the reaction dimethylallyl diphosphate + 2 oxidized [2Fe-2S]-[ferredoxin] + H2O = (2E)-4-hydroxy-3-methylbut-2-enyl diphosphate + 2 reduced [2Fe-2S]-[ferredoxin] + 2 H(+). It participates in isoprenoid biosynthesis; dimethylallyl diphosphate biosynthesis; dimethylallyl diphosphate from (2E)-4-hydroxy-3-methylbutenyl diphosphate: step 1/1. It functions in the pathway isoprenoid biosynthesis; isopentenyl diphosphate biosynthesis via DXP pathway; isopentenyl diphosphate from 1-deoxy-D-xylulose 5-phosphate: step 6/6. In terms of biological role, catalyzes the conversion of 1-hydroxy-2-methyl-2-(E)-butenyl 4-diphosphate (HMBPP) into a mixture of isopentenyl diphosphate (IPP) and dimethylallyl diphosphate (DMAPP). Acts in the terminal step of the DOXP/MEP pathway for isoprenoid precursor biosynthesis. This chain is 4-hydroxy-3-methylbut-2-enyl diphosphate reductase, found in Chlamydia trachomatis serovar L2b (strain UCH-1/proctitis).